We begin with the raw amino-acid sequence, 261 residues long: Protein OSB1, mitochondrial (261 aa).

The N-terminal 28 residues, 1–28, are a transit peptide targeting the mitochondrion; sequence MNTFFKLGSLIQRTASQISSSFPKSRFF. The region spanning 55–155 is the SSB domain; it reads VNSVSLMGFV…VKVAEVNYVA (101 aa). Residues 189–238 are PDF region; sequence WQVFFSNPYDWWDNRRNKKNPKQPDFKHKDTGEALWLCSDLPDWITRRLE.

Expressed in root elongation zone and in gametophytic cells.

The protein resides in the mitochondrion. Its function is as follows. Regulates mitochondrial DNA recombination. Represses homologous recombination, preventing mitochondrial genome instability and unbalanced transmission of alternative mtDNA configurations. Binds preferentially single-stranded DNA. Does not bind to RNA. In Arabidopsis thaliana (Mouse-ear cress), this protein is Protein OSB1, mitochondrial (OSB1).